The primary structure comprises 253 residues: 2-succinyl-6-hydroxy-2,4-cyclohexadiene-1-carboxylate synthase (253 aa).

One can recognise an AB hydrolase-1 domain in the interval 11 to 147 (PWLVCLHGLF…PEALQDWYQQ (137 aa)).

The protein belongs to the AB hydrolase superfamily. MenH family. As to quaternary structure, monomer.

It carries out the reaction 5-enolpyruvoyl-6-hydroxy-2-succinyl-cyclohex-3-ene-1-carboxylate = (1R,6R)-6-hydroxy-2-succinyl-cyclohexa-2,4-diene-1-carboxylate + pyruvate. It functions in the pathway quinol/quinone metabolism; 1,4-dihydroxy-2-naphthoate biosynthesis; 1,4-dihydroxy-2-naphthoate from chorismate: step 3/7. Its pathway is quinol/quinone metabolism; menaquinone biosynthesis. Functionally, catalyzes a proton abstraction reaction that results in 2,5-elimination of pyruvate from 2-succinyl-5-enolpyruvyl-6-hydroxy-3-cyclohexene-1-carboxylate (SEPHCHC) and the formation of 2-succinyl-6-hydroxy-2,4-cyclohexadiene-1-carboxylate (SHCHC). The protein is 2-succinyl-6-hydroxy-2,4-cyclohexadiene-1-carboxylate synthase of Pectobacterium atrosepticum (strain SCRI 1043 / ATCC BAA-672) (Erwinia carotovora subsp. atroseptica).